The chain runs to 388 residues: Mitochondrial distribution and morphology protein 12 (388 aa).

Positions 1–388 constitute an SMP-LTD domain; that stretch reads MSLDINWSLL…VFPNFHTVAL (388 aa). Disordered stretches follow at residues 75 to 101 and 209 to 249; these read DDEG…RNEA and PMSI…KVSS. Basic and acidic residues predominate over residues 83–101; the sequence is EEKQREKEREERDKLRNEA. A compositionally biased stretch (pro residues) spans 234–243; sequence PSPPAHPAGL.

It belongs to the MDM12 family. Component of the ER-mitochondria encounter structure (ERMES) or MDM complex, composed of MMM1, MDM10, MDM12 and MDM34. An MMM1 homodimer associates with one molecule of MDM12 on each side in a pairwise head-to-tail manner, and the SMP-LTD domains of MMM1 and MDM12 generate a continuous hydrophobic tunnel for phospholipid trafficking.

It localises to the mitochondrion outer membrane. Its subcellular location is the endoplasmic reticulum membrane. Functionally, component of the ERMES/MDM complex, which serves as a molecular tether to connect the endoplasmic reticulum (ER) and mitochondria. Components of this complex are involved in the control of mitochondrial shape and protein biogenesis, and function in nonvesicular lipid trafficking between the ER and mitochondria. MDM12 is required for the interaction of the ER-resident membrane protein MMM1 and the outer mitochondrial membrane-resident beta-barrel protein MDM10. The MDM12-MMM1 subcomplex functions in the major beta-barrel assembly pathway that is responsible for biogenesis of all mitochondrial outer membrane beta-barrel proteins, and acts in a late step after the SAM complex. The MDM10-MDM12-MMM1 subcomplex further acts in the TOM40-specific pathway after the action of the MDM12-MMM1 complex. Essential for establishing and maintaining the structure of mitochondria and maintenance of mtDNA nucleoids. The chain is Mitochondrial distribution and morphology protein 12 from Cryptococcus neoformans var. neoformans serotype D (strain JEC21 / ATCC MYA-565) (Filobasidiella neoformans).